We begin with the raw amino-acid sequence, 363 residues long: MSGNTFGKLFTVTTAGESHGPALVAIVDGCPPGLELDLQDLQRDLDRRKPGTSRHTTQRQEADEVEILSGVFEGKTTGASIGLLIRNTDQKSKDYSAIKDLFRPAHADYTYHHKYGIRDYRGGGRSSARETAMRVAAGAIAKKYLATQGIVIRGYMSQLGPIQIPFKTWDSVEDNAFFCPDPDKVPELEAYMDQLRRDQDSVGAKITVVAEGVMPGLGEPIFDRLDAELAHALMNINAVKGVEIGAGFDCVAQRGTEHRDEMTPLGFLSNQAGGILGGISSGQPIIAHLALKPTSSITTPGRSIDTDGNAADVITKGRHDPCVGIRATPIAEAMMAIVLLDHLLRHRGQNADVSVNTPVLGQL.

The NADP(+) site is built by Arg-48 and Arg-54. FMN-binding positions include 125–127 (RSS), 237–238 (NA), Gly-277, 292–296 (KPTSS), and Arg-318.

The protein belongs to the chorismate synthase family. In terms of assembly, homotetramer. It depends on FMNH2 as a cofactor.

It catalyses the reaction 5-O-(1-carboxyvinyl)-3-phosphoshikimate = chorismate + phosphate. It participates in metabolic intermediate biosynthesis; chorismate biosynthesis; chorismate from D-erythrose 4-phosphate and phosphoenolpyruvate: step 7/7. In terms of biological role, catalyzes the anti-1,4-elimination of the C-3 phosphate and the C-6 proR hydrogen from 5-enolpyruvylshikimate-3-phosphate (EPSP) to yield chorismate, which is the branch point compound that serves as the starting substrate for the three terminal pathways of aromatic amino acid biosynthesis. This reaction introduces a second double bond into the aromatic ring system. The chain is Chorismate synthase from Pseudomonas savastanoi pv. phaseolicola (strain 1448A / Race 6) (Pseudomonas syringae pv. phaseolicola (strain 1448A / Race 6)).